The sequence spans 109 residues: Hainantoxin-XVIII-2 (109 aa).

The signal sequence occupies residues 1-18; it reads MKLSIIIIATSLVIAVVA. Positions 19 to 46 are excised as a propeptide; the sequence is FPSKDSKAIENDKTEQRMEIVVQETARA. Cystine bridges form between C47/C62, C59/C108, and C61/C81.

It belongs to the neurotoxin 25 family. F7 subfamily. As to expression, expressed by the venom gland.

It localises to the secreted. Its function is as follows. Putative ion channel inhibitor. This Cyriopagopus hainanus (Chinese bird spider) protein is Hainantoxin-XVIII-2.